Consider the following 65-residue polypeptide: Large ribosomal subunit protein bL35 (65 aa).

It belongs to the bacterial ribosomal protein bL35 family.

The sequence is that of Large ribosomal subunit protein bL35 from Clostridium botulinum (strain Loch Maree / Type A3).